The chain runs to 1031 residues: Telomerase reverse transcriptase (1031 aa).

A Reverse transcriptase domain is found at 498-852 (KEVEEWKKSL…DYCDWIGISI (355 aa)). Positions 603, 781, and 782 each coordinate Mg(2+).

Belongs to the reverse transcriptase family. Telomerase subfamily. Component of the telomerase holoenzyme complex composed minimally of the catalytic subunit p123 and the telomerase RNA template component.

It is found in the nucleus. The protein resides in the chromosome. It localises to the telomere. The catalysed reaction is DNA(n) + a 2'-deoxyribonucleoside 5'-triphosphate = DNA(n+1) + diphosphate. Its function is as follows. Telomerase is a ribonucleoprotein enzyme essential for the replication of chromosome termini in most eukaryotes. It elongates telomeres. It is a reverse transcriptase that adds simple sequence repeats to chromosome ends by copying a template sequence within the RNA component of the enzyme. This is Telomerase reverse transcriptase from Euplotes aediculatus (Ciliate).